The chain runs to 167 residues: MKILVIQGPNLNMLGHRDPRLYGMVTLDQIHEIMQTFVKQGNLDVELEFFQTNFEGEIIDKIQESVGSDYEGIIINPGAFSHTSIAIADAIMLAGKPVIEVHLTNIQAREEFRKNSYTGAACGGVIMGFGPLGYNMALMAMVNILAEMKAFQEAQQNNPNNPINNQK.

Residue Tyr22 is the Proton acceptor of the active site. Asn76, His82, and Asp89 together coordinate substrate. Catalysis depends on His102, which acts as the Proton donor. Substrate is bound by residues 103 to 104 (LT) and Arg113.

Belongs to the type-II 3-dehydroquinase family. As to quaternary structure, homododecamer.

It catalyses the reaction 3-dehydroquinate = 3-dehydroshikimate + H2O. The protein operates within metabolic intermediate biosynthesis; chorismate biosynthesis; chorismate from D-erythrose 4-phosphate and phosphoenolpyruvate: step 3/7. Functionally, catalyzes a trans-dehydration via an enolate intermediate. The protein is 3-dehydroquinate dehydratase of Helicobacter pylori (strain Shi470).